The following is a 350-amino-acid chain: uncharacterized protein (350 aa).

A run of 3 helical transmembrane segments spans residues tyrosine 10 to glycine 30, phenylalanine 51 to threonine 71, and isoleucine 327 to phenylalanine 347.

It belongs to the 1-acyl-sn-glycerol-3-phosphate acyltransferase family.

Its subcellular location is the endoplasmic reticulum membrane. This is an uncharacterized protein from Schizosaccharomyces pombe (strain 972 / ATCC 24843) (Fission yeast).